A 161-amino-acid chain; its full sequence is Nucleoside diphosphate kinase (161 aa).

6 residues coordinate ATP: Lys13, Phe61, Arg89, Thr95, Arg106, and Asn116. His119 (pros-phosphohistidine intermediate) is an active-site residue.

It belongs to the NDK family. Mg(2+) serves as cofactor.

The protein localises to the cytoplasm. It catalyses the reaction a 2'-deoxyribonucleoside 5'-diphosphate + ATP = a 2'-deoxyribonucleoside 5'-triphosphate + ADP. It carries out the reaction a ribonucleoside 5'-diphosphate + ATP = a ribonucleoside 5'-triphosphate + ADP. Functionally, major role in the synthesis of nucleoside triphosphates other than ATP. The ATP gamma phosphate is transferred to the NDP beta phosphate via a ping-pong mechanism, using a phosphorylated active-site intermediate. The sequence is that of Nucleoside diphosphate kinase from Halobacterium salinarum (strain ATCC 29341 / DSM 671 / R1).